A 373-amino-acid chain; its full sequence is DNA replication and repair protein RecF (373 aa).

Residue 30–37 (GANGSGKT) participates in ATP binding.

The protein belongs to the RecF family.

It localises to the cytoplasm. The RecF protein is involved in DNA metabolism; it is required for DNA replication and normal SOS inducibility. RecF binds preferentially to single-stranded, linear DNA. It also seems to bind ATP. In Marinobacter nauticus (strain ATCC 700491 / DSM 11845 / VT8) (Marinobacter aquaeolei), this protein is DNA replication and repair protein RecF.